A 902-amino-acid chain; its full sequence is Respiratory nitrate reductase alpha chain (902 aa).

[4Fe-4S] cluster-binding residues include H29, C33, and C37.

Belongs to the prokaryotic molybdopterin-containing oxidoreductase family. Heterotrimer composed of an alpha, a beta and a gamma chain. Alpha and beta are catalytic chains; gamma chains are involved in binding the enzyme complex to the cytoplasmic membrane. Requires [4Fe-4S] cluster as cofactor. The cofactor is Mo-bis(molybdopterin guanine dinucleotide).

It is found in the cell membrane. Its subcellular location is the cytoplasm. The catalysed reaction is nitrate + a quinol = a quinone + nitrite + H2O. Inhibited by micromolar concentrations of azide. The nitrate reductase enzyme complex allows Bradyrhizobium sp. USDA 3045 to use nitrate as an electron acceptor during anaerobic growth. The alpha chain is the actual site of nitrate reduction. In Bradyrhizobium sp, this protein is Respiratory nitrate reductase alpha chain (narG).